A 694-amino-acid polypeptide reads, in one-letter code: 4-alpha-glucanotransferase (694 aa).

Belongs to the disproportionating enzyme family.

The protein localises to the cytoplasm. The enzyme catalyses Transfers a segment of a (1-&gt;4)-alpha-D-glucan to a new position in an acceptor, which may be glucose or a (1-&gt;4)-alpha-D-glucan.. The chain is 4-alpha-glucanotransferase (malQ) from Escherichia coli (strain K12).